The following is a 257-amino-acid chain: MFGKLVRPGRPMSSGVRELMWRVLRGTSLNNYSAAQLRFMHLILCKMYNYALNVLLFRETLANCACRDDCVLGRKVPPEIWRLVYDGCKEMGVTDEMLGEERRRAQLWMHFNANRALLEGLTNYVTHRLGVTHAVSVCSNNITDGNYLFNLGSVLPSRILMSIAYCLVFWGRQECEPWVRHFSSKVFILYLMVSGHLRLEGSFADASAACGYQGVVEVVMRDMRGYRGVEGPVAPGGEAPPTDTLDYLFVFNNNVLF.

It belongs to the herpesviridae UL79 family.

The chain is Gene 18 protein (18) from Equus caballus (Horse).